The sequence spans 815 residues: cGMP-specific 3',5'-cyclic phosphodiesterase delta (815 aa).

Over 1–56 the chain is Cytoplasmic; the sequence is MNEYNNDNMEQEKEKKKEEQKYKNIIKKEYFIFPRLYDKNKEIEYNKLRIHNIKEY. A helical transmembrane segment spans residues 57–77; sequence ICIHLTISLFIILIECFVFSF. Over 78-86 the chain is Extracellular; that stretch reads NLNIKDTTY. Residues 87–107 traverse the membrane as a helical segment; sequence VEICVVIFSILNCLMHIVVLI. Residues 108-120 lie on the Cytoplasmic side of the membrane; sequence KMYFFTSESVYTK. The chain crosses the membrane as a helical span at residues 121 to 141; that stretch reads GVFIGYIVLNQVFQFLSLYFF. The Extracellular segment spans residues 142-160; that stretch reads TKRNEQSKNDIAHLKYYDN. A helical transmembrane segment spans residues 161–181; that stretch reads SFNLYVHFFVDSVFILCLPAL. The Cytoplasmic portion of the chain corresponds to 182 to 183; the sequence is SF. The chain crosses the membrane as a helical span at residues 184-204; the sequence is FLSVLFMMMFLCLNILLINMI. Residues 205–210 lie on the Extracellular side of the membrane; that stretch reads KFNKTN. N-linked (GlcNAc...) asparagine glycosylation occurs at Asn207. The chain crosses the membrane as a helical span at residues 211–231; that stretch reads YGSDIYHICLLSVVLLMFLIL. Topologically, residues 232 to 815 are cytoplasmic; it reads RYMMEERNRL…FKEEIKHGKL (584 aa). Residues 384–762 enclose the PDEase domain; the sequence is YEVEVLKNIK…QTWRLIEKNI (379 aa). The active-site Proton donor is His459. 459 to 463 is a 3',5'-cyclic GMP binding site; that stretch reads HNANH. Positions 463, 499, 500, and 616 each coordinate a divalent metal cation. 3',5'-cyclic GMP contacts are provided by Asp500, Asp616, and Gln715.

Belongs to the cyclic nucleotide phosphodiesterase family. Requires a divalent metal cation as cofactor.

Its subcellular location is the membrane. It catalyses the reaction 3',5'-cyclic GMP + H2O = GMP + H(+). It participates in purine metabolism; 3',5'-cyclic GMP degradation; GMP from 3',5'-cyclic GMP: step 1/1. In terms of biological role, specifically hydrolyzes the second messenger cGMP, which is a key regulator of many important physiological processes. Probably by regulating cGMP levels, required for activation of gametogenesis. In Plasmodium falciparum (isolate 3D7), this protein is cGMP-specific 3',5'-cyclic phosphodiesterase delta.